We begin with the raw amino-acid sequence, 63 residues long: Anaphase-promoting complex subunit 13 (63 aa).

The segment at 36–63 is disordered; the sequence is KTDDTEETNQETQQADAETWRDLALDTQ. Basic and acidic residues predominate over residues 53–63; the sequence is ETWRDLALDTQ.

This sequence belongs to the APC13 family. As to quaternary structure, component of the anaphase promoting complex/cyclosome (APC/C) complex. In terms of tissue distribution, expressed constitutively in roots, leaves, stems, buds, flowers, and seeds.

The protein localises to the nucleus. Its pathway is protein modification; protein ubiquitination. Component of the anaphase promoting complex/cyclosome (APC/C), a cell cycle-regulated E3 ubiquitin ligase that controls progression through mitosis and the G1 phase of the cell cycle. The APC/C complex acts by mediating ubiquitination and subsequent degradation of target proteins. Regulates global growth and development, including phyllotaxis and apical dominance. Required for pollen maturation. Promotes (pri) miRNA transcription of each MIR159 genes. This chain is Anaphase-promoting complex subunit 13, found in Arabidopsis thaliana (Mouse-ear cress).